A 715-amino-acid polypeptide reads, in one-letter code: Fatty acid oxidation complex subunit alpha (715 aa).

An enoyl-CoA hydratase region spans residues 1–190 (MTTTSAFMLN…KAGLVDDVVP (190 aa)). The segment at 306-715 (GPLNSVGILG…WTNGETDQGN (410 aa)) is 3-hydroxyacyl-CoA dehydrogenase.

It in the N-terminal section; belongs to the enoyl-CoA hydratase/isomerase family. The protein in the central section; belongs to the 3-hydroxyacyl-CoA dehydrogenase family. Heterotetramer of two alpha chains (FadJ) and two beta chains (FadI).

It is found in the cytoplasm. The catalysed reaction is a (3S)-3-hydroxyacyl-CoA = a (2E)-enoyl-CoA + H2O. The enzyme catalyses a 4-saturated-(3S)-3-hydroxyacyl-CoA = a (3E)-enoyl-CoA + H2O. It catalyses the reaction a (3S)-3-hydroxyacyl-CoA + NAD(+) = a 3-oxoacyl-CoA + NADH + H(+). It carries out the reaction (3S)-3-hydroxybutanoyl-CoA = (3R)-3-hydroxybutanoyl-CoA. Its pathway is lipid metabolism; fatty acid beta-oxidation. Its function is as follows. Catalyzes the formation of a hydroxyacyl-CoA by addition of water on enoyl-CoA. Also exhibits 3-hydroxyacyl-CoA epimerase and 3-hydroxyacyl-CoA dehydrogenase activities. In Salmonella dublin (strain CT_02021853), this protein is Fatty acid oxidation complex subunit alpha.